Reading from the N-terminus, the 61-residue chain is UPF0391 membrane protein Pnap_0032 (61 aa).

The next 2 helical transmembrane spans lie at 5–25 (AIIF…GVAA) and 33–53 (VLFG…ALGV).

Belongs to the UPF0391 family.

The protein localises to the cell membrane. The sequence is that of UPF0391 membrane protein Pnap_0032 from Polaromonas naphthalenivorans (strain CJ2).